The sequence spans 363 residues: Flagellar P-ring protein (363 aa).

A signal peptide spans 1-20 (MKCKLIFAVFMLAFSMPSQA).

Belongs to the FlgI family. As to quaternary structure, the basal body constitutes a major portion of the flagellar organelle and consists of four rings (L,P,S, and M) mounted on a central rod.

The protein localises to the periplasm. It localises to the bacterial flagellum basal body. Functionally, assembles around the rod to form the L-ring and probably protects the motor/basal body from shearing forces during rotation. This Shewanella oneidensis (strain ATCC 700550 / JCM 31522 / CIP 106686 / LMG 19005 / NCIMB 14063 / MR-1) protein is Flagellar P-ring protein.